The primary structure comprises 182 residues: Peptidoglycan-recognition protein SB2 (182 aa).

The first 17 residues, 1 to 17 (MKLQLALVLCGLTLALG), serve as a signal peptide directing secretion. Residues 40-165 (PVRLIIIHHT…CQTKATACPG (126 aa)) form the N-acetylmuramoyl-L-alanine amidase domain. Histidine 47 is a binding site for Zn(2+). A disulfide bridge connects residues cysteine 54 and cysteine 60. An N-linked (GlcNAc...) asparagine glycan is attached at asparagine 149. Residues histidine 155 and cysteine 163 each coordinate Zn(2+).

It belongs to the N-acetylmuramoyl-L-alanine amidase 2 family. Zn(2+) serves as cofactor.

It is found in the secreted. It catalyses the reaction Hydrolyzes the link between N-acetylmuramoyl residues and L-amino acid residues in certain cell-wall glycopeptides.. N-acetylmuramyl-L-alanine amidase involved in innate immunity by degrading bacterial peptidoglycans (PGN). Probably plays a scavenger role by digesting biologically active PGN into biologically inactive fragments. Has no direct bacteriolytic activity. The chain is Peptidoglycan-recognition protein SB2 (PGRP-SB2) from Drosophila simulans (Fruit fly).